We begin with the raw amino-acid sequence, 375 residues long: uncharacterized protein (375 aa).

The protein belongs to the IMPDH/GMPR family.

This is an uncharacterized protein from Mycobacterium tuberculosis (strain CDC 1551 / Oshkosh).